The primary structure comprises 1436 residues: Probable deoxyribonuclease RhsB (1436 aa).

The segment at 16–42 is disordered; that stretch reads HAGNRPNPPADRPQPCQGKPPTSPGKT. Transmembrane regions (helical) follow at residues 48 to 68 and 70 to 90; these read FLGALAGAVAGALVAAAVAAA and VFLVGVTGGLAVAAVGALAVF. YD repeat units follow at residues 486–521, 569–605, 612–647, 766–799, and 847–879; these read YNTAHRLTRWHDNDQTWARYEYDAQGRCVYTTCADG, YDEVGNLLREISPAGRVVEFTYLDDTGRVSTFTDGSG, YDDAQRLCGVTDPLGREWGWVYDAEGNPERLTGPDA, DLLTARTDAEGRTWRYEYDRESQQLIAVTAPDGS, and YDARGLLLRETAPDDTLHYRYDAAGRLTEVSSA.

The protein belongs to the RHS/WapA nuclease family.

It localises to the membrane. Toxic component of a toxin-immunity protein module, which functions as a cellular contact-dependent growth inhibition (CDI) system. This protein may be a nuclease that is specifically inhibited by its cognate immunity protein RhsBI. Upon expression of the C-terminus (residues 1284-1436) in E.coli growth is inhibited, cells elongate, nucleoids condense and plasmid DNA is degraded; these effects are blocked specifically by cognate immunity protein RshIB. Cell contact is necessary for growth inhibition. This is Probable deoxyribonuclease RhsB (rhsB) from Dickeya dadantii (strain 3937) (Erwinia chrysanthemi (strain 3937)).